The chain runs to 232 residues: Large ribosomal subunit protein uL1 (232 aa).

The protein belongs to the universal ribosomal protein uL1 family. In terms of assembly, part of the 50S ribosomal subunit.

Binds directly to 23S rRNA. The L1 stalk is quite mobile in the ribosome, and is involved in E site tRNA release. Functionally, protein L1 is also a translational repressor protein, it controls the translation of the L11 operon by binding to its mRNA. The polypeptide is Large ribosomal subunit protein uL1 (Jannaschia sp. (strain CCS1)).